Here is a 239-residue protein sequence, read N- to C-terminus: Probable 2-phosphosulfolactate phosphatase (239 aa).

The protein belongs to the ComB family. Mg(2+) serves as cofactor.

The enzyme catalyses (2R)-O-phospho-3-sulfolactate + H2O = (2R)-3-sulfolactate + phosphate. The chain is Probable 2-phosphosulfolactate phosphatase from Clostridium botulinum (strain Kyoto / Type A2).